A 359-amino-acid chain; its full sequence is DNA-directed RNA polymerase RPB3-11 homolog (359 aa).

The protein in the N-terminal section; belongs to the archaeal RpoD/eukaryotic RPB3 RNA polymerase subunit family. This sequence in the C-terminal section; belongs to the archaeal RpoL/eukaryotic RPB11/RPC19 RNA polymerase subunit family. In terms of assembly, part of the viral DNA-directed RNA polymerase that consists of 8 polII-like subunits (RPB1, RPB2, RPB3, RPB5, RPB6, RPB7, RPB9, RPB10), a capping enzyme and a termination factor.

It is found in the host cytoplasm. The protein resides in the virion. In terms of biological role, component of the DNA-directed RNA polymerase (RNAP) that catalyzes the transcription in the cytoplasm of viral DNA into RNA using the four ribonucleoside triphosphates as substrates. This Ornithodoros (relapsing fever ticks) protein is DNA-directed RNA polymerase RPB3-11 homolog.